Here is a 78-residue protein sequence, read N- to C-terminus: Large ribosomal subunit protein bL28 (78 aa).

Residues Met-1 to Leu-33 are disordered. Positions Thr-14–Lys-24 are enriched in polar residues.

Belongs to the bacterial ribosomal protein bL28 family.

This is Large ribosomal subunit protein bL28 from Salinibacter ruber (strain DSM 13855 / M31).